A 1335-amino-acid chain; its full sequence is Phospholipid-transporting ATPase IK (1335 aa).

At 1-74 the chain is on the cytoplasmic side; it reads MDGVHLGENL…LYEQFHRMSN (74 aa). Residues 75 to 95 traverse the membrane as a helical segment; that stretch reads LYFLFIIILQGIPEISTLPWF. Residues 96–295 lie on the Exoplasmic loop side of the membrane; that stretch reads TLFAPLVCLF…LDLMMNKLVA (200 aa). The helical transmembrane segment at 296 to 316 threads the bilayer; the sequence is LIFLSLVIASLLLTVGFTFMV. Residues 317 to 339 lie on the Cytoplasmic side of the membrane; sequence KQFKAKHYYMSPTHGRSDAMESF. Residues 340 to 360 form a helical membrane-spanning segment; that stretch reads FIFWGFLILLSVMVPMAMFII. The Exoplasmic loop portion of the chain corresponds to 361–917; the sequence is AEFIYLGNSI…YMRVCKFLRY (557 aa). The active-site 4-aspartylphosphate intermediate is D407. ATP is bound by residues D407, K408, T409, E504, F545, K568, R601, T681, G682, D683, R831, and K837. D407 contributes to the Mg(2+) binding site. T409 provides a ligand contact to Mg(2+). Residue D857 participates in Mg(2+) binding. The ATP site is built by N860 and D861. D861 serves as a coordination point for Mg(2+). The helical transmembrane segment at 918–938 threads the bilayer; the sequence is FFYKTVASMMAQIWFSLVNGF. Topologically, residues 939 to 946 are cytoplasmic; that stretch reads SAQPLYEG. A helical membrane pass occupies residues 947 to 967; the sequence is WFLALFNLLYSTLPVLYIGLF. Residues 968 to 995 lie on the Exoplasmic loop side of the membrane; the sequence is EQDVTAEKSLKMPELYMAGQKGELFNYS. A helical membrane pass occupies residues 996 to 1016; sequence IFMQAITHGTITSMINFFVTV. Residues 1017–1033 lie on the Cytoplasmic side of the membrane; that stretch reads MVSSDMSKAGSSHDYQS. Residues 1034–1054 traverse the membrane as a helical segment; it reads LGVLVAISSLLSVTLEVMLVV. Residue K1055 is a topological domain, exoplasmic loop. A helical membrane pass occupies residues 1056-1076; that stretch reads YWTLLFVGAVVLSLSSYVLMT. Residues 1077-1104 are Cytoplasmic-facing; sequence SLTQSLWMYRISPKTFPFLFADYNVLFE. A helical transmembrane segment spans residues 1105-1125; that stretch reads PCSLLLIVLNVALNVLPMLAL. At 1126–1335 the chain is on the exoplasmic loop side; it reads RTIHRTVLKQ…SQLEVPRKQS (210 aa). Disordered stretches follow at residues 1192 to 1215, 1236 to 1280, and 1314 to 1335; these read VDDSDGGTVCESLNPPEEDIPLQN, FGKG…GKLL, and SPLWRDSASSSPSQLEVPRKQS. 2 stretches are compositionally biased toward polar residues: residues 1246–1255 and 1266–1276; these read PNTSSQTMEK and QKLPTTTSATS.

This sequence belongs to the cation transport ATPase (P-type) (TC 3.A.3) family. Type IV subfamily. Requires Mg(2+) as cofactor. Expressed in testis, specifically in spermatids within seminiferous tubules (at protein level).

It localises to the cytoplasmic vesicle. It is found in the secretory vesicle. Its subcellular location is the acrosome membrane. The protein localises to the endoplasmic reticulum membrane. It catalyses the reaction ATP + H2O + phospholipidSide 1 = ADP + phosphate + phospholipidSide 2.. It carries out the reaction a 1,2-diacyl-sn-glycero-3-phospho-L-serine(out) + ATP + H2O = a 1,2-diacyl-sn-glycero-3-phospho-L-serine(in) + ADP + phosphate + H(+). In terms of biological role, P4-ATPase flippase which catalyzes the hydrolysis of ATP coupled to the transport of aminophospholipids from the outer to the inner leaflet of various membranes and ensures the maintenance of asymmetric distribution of phospholipids. Phospholipid translocation also seems to be implicated in vesicle formation and in uptake of lipid signaling molecules. May be responsible for the maintenance of asymmetric distribution of phosphatidylserine (PS) in spermatozoa membranes. Involved in acrosome reactions and binding of spermatozoa to zona pellucida. The protein is Phospholipid-transporting ATPase IK of Mus musculus (Mouse).